The following is a 116-amino-acid chain: MAGFGLPNFGQLTEAFKKAKEIQQNAQKLQDELESMEIEGKSDDEMIKVWISGNQLPLRVEVNENISTANKEEIEKNILEAIKKAHESSTTTMKERMNDLTGGLNLNLPGLDNNDS.

Basic and acidic residues predominate over residues 87–98 (ESSTTTMKERMN). The tract at residues 87–116 (ESSTTTMKERMNDLTGGLNLNLPGLDNNDS) is disordered. Residues 99–116 (DLTGGLNLNLPGLDNNDS) are compositionally biased toward low complexity.

It belongs to the YbaB/EbfC family. Homodimer.

It is found in the cytoplasm. It localises to the nucleoid. Binds to DNA and alters its conformation. May be involved in regulation of gene expression, nucleoid organization and DNA protection. The protein is Nucleoid-associated protein PMM0020 of Prochlorococcus marinus subsp. pastoris (strain CCMP1986 / NIES-2087 / MED4).